Reading from the N-terminus, the 571-residue chain is Fumarate reductase (cytochrome) (571 aa).

20 residues coordinate heme c: His8, Cys14, Cys17, His18, Cys36, Cys39, His40, His52, His58, His61, Cys68, Cys71, His72, Ala74, His75, Cys82, Cys85, His86, Asn91, and Tyr94. Residues 118–571 form a flavoprotein-like region; that stretch reads ALASAPHDTV…EEAAKYSKKN (454 aa). FAD contacts are provided by Ala137, Glu156, Asn164, Ala165, Ala169, Gly170, Gly171, Gly278, and Gln338. Gly170 serves as a coordination point for succinate. Succinate-binding residues include His365, Thr377, and Glu378. Residues Thr377, Glu378, and Arg402 each coordinate fumarate. Arg402 (proton donor) is an active-site residue. Lys431 contacts heme c. His504 is a binding site for succinate. His504 contacts fumarate. His505 and Glu534 together coordinate FAD. Succinate is bound by residues Arg544 and Gly547. The fumarate site is built by Arg544 and Gly547. FAD is bound by residues Ala549 and Ile550.

As to quaternary structure, monomer. Requires FAD as cofactor. Heme c is required as a cofactor.

It is found in the periplasm. It catalyses the reaction 2 Fe(III)-[cytochrome c] + succinate = fumarate + 2 Fe(II)-[cytochrome c] + 2 H(+). Its function is as follows. Flavocytochrome that catalyzes the reduction of fumarate to succinate. Is essential for fumarate respiration during anaerobic growth, acting as the terminal reductase. Receives electrons from the membrane-bound tetraheme c-type cytochrome CymA. In vitro, can use the artificial electron donor methyl viologen. This Shewanella frigidimarina protein is Fumarate reductase (cytochrome) (fccA).